The following is a 316-amino-acid chain: 4-hydroxy-3-methylbut-2-enyl diphosphate reductase (316 aa).

Cysteine 12 contacts [4Fe-4S] cluster. Positions 41 and 74 each coordinate (2E)-4-hydroxy-3-methylbut-2-enyl diphosphate. The dimethylallyl diphosphate site is built by histidine 41 and histidine 74. The isopentenyl diphosphate site is built by histidine 41 and histidine 74. Cysteine 96 is a [4Fe-4S] cluster binding site. Histidine 124 is a binding site for (2E)-4-hydroxy-3-methylbut-2-enyl diphosphate. Histidine 124 is a binding site for dimethylallyl diphosphate. Histidine 124 is a binding site for isopentenyl diphosphate. Glutamate 126 (proton donor) is an active-site residue. Threonine 167 contacts (2E)-4-hydroxy-3-methylbut-2-enyl diphosphate. Cysteine 197 contributes to the [4Fe-4S] cluster binding site. Positions 225, 226, 227, and 269 each coordinate (2E)-4-hydroxy-3-methylbut-2-enyl diphosphate. Residues serine 225, serine 226, asparagine 227, and serine 269 each contribute to the dimethylallyl diphosphate site. Isopentenyl diphosphate contacts are provided by serine 225, serine 226, asparagine 227, and serine 269.

The protein belongs to the IspH family. Homodimer. It depends on [4Fe-4S] cluster as a cofactor.

It carries out the reaction isopentenyl diphosphate + 2 oxidized [2Fe-2S]-[ferredoxin] + H2O = (2E)-4-hydroxy-3-methylbut-2-enyl diphosphate + 2 reduced [2Fe-2S]-[ferredoxin] + 2 H(+). It catalyses the reaction dimethylallyl diphosphate + 2 oxidized [2Fe-2S]-[ferredoxin] + H2O = (2E)-4-hydroxy-3-methylbut-2-enyl diphosphate + 2 reduced [2Fe-2S]-[ferredoxin] + 2 H(+). It functions in the pathway isoprenoid biosynthesis; dimethylallyl diphosphate biosynthesis; dimethylallyl diphosphate from (2E)-4-hydroxy-3-methylbutenyl diphosphate: step 1/1. The protein operates within isoprenoid biosynthesis; isopentenyl diphosphate biosynthesis via DXP pathway; isopentenyl diphosphate from 1-deoxy-D-xylulose 5-phosphate: step 6/6. Its function is as follows. Catalyzes the conversion of 1-hydroxy-2-methyl-2-(E)-butenyl 4-diphosphate (HMBPP) into a mixture of isopentenyl diphosphate (IPP) and dimethylallyl diphosphate (DMAPP). Acts in the terminal step of the DOXP/MEP pathway for isoprenoid precursor biosynthesis. The chain is 4-hydroxy-3-methylbut-2-enyl diphosphate reductase from Cronobacter sakazakii (strain ATCC BAA-894) (Enterobacter sakazakii).